Here is a 355-residue protein sequence, read N- to C-terminus: Elongation factor Ts (355 aa).

An involved in Mg(2+) ion dislocation from EF-Tu region spans residues 82 to 85; that stretch reads TDFV.

The protein belongs to the EF-Ts family.

The protein resides in the cytoplasm. Associates with the EF-Tu.GDP complex and induces the exchange of GDP to GTP. It remains bound to the aminoacyl-tRNA.EF-Tu.GTP complex up to the GTP hydrolysis stage on the ribosome. The chain is Elongation factor Ts from Helicobacter pylori (strain Shi470).